Here is a 369-residue protein sequence, read N- to C-terminus: Putative 2-aminoethylphosphonate import ATP-binding protein PhnT (369 aa).

An ABC transporter domain is found at I19–L250. G51–T58 contacts ATP.

This sequence belongs to the ABC transporter superfamily. 2-aminoethylphosphonate importer (TC 3.A.1.11.5) family.

It localises to the cell inner membrane. Probably part of the PhnSTUV complex (TC 3.A.1.11.5) involved in 2-aminoethylphosphonate import. Probably responsible for energy coupling to the transport system. This Salmonella paratyphi A (strain ATCC 9150 / SARB42) protein is Putative 2-aminoethylphosphonate import ATP-binding protein PhnT (phnT).